The following is a 156-amino-acid chain: Small ribosomal subunit protein uS7 (156 aa).

It belongs to the universal ribosomal protein uS7 family. In terms of assembly, part of the 30S ribosomal subunit. Contacts proteins S9 and S11.

Its function is as follows. One of the primary rRNA binding proteins, it binds directly to 16S rRNA where it nucleates assembly of the head domain of the 30S subunit. Is located at the subunit interface close to the decoding center, probably blocks exit of the E-site tRNA. In Mycoplasmopsis agalactiae (strain NCTC 10123 / CIP 59.7 / PG2) (Mycoplasma agalactiae), this protein is Small ribosomal subunit protein uS7.